The chain runs to 448 residues: Chromosomal replication initiator protein DnaA (448 aa).

Residues Met-1–Ser-93 form a domain I, interacts with DnaA modulators region. Residues Ser-94–Thr-110 are domain II. A domain III, AAA+ region region spans residues Gly-111–Cys-328. ATP is bound by residues Gly-156, Gly-158, Lys-159, and Thr-160. Positions Asn-329 to Ser-448 are domain IV, binds dsDNA.

Belongs to the DnaA family. Oligomerizes as a right-handed, spiral filament on DNA at oriC.

The protein localises to the cytoplasm. In terms of biological role, plays an essential role in the initiation and regulation of chromosomal replication. ATP-DnaA binds to the origin of replication (oriC) to initiate formation of the DNA replication initiation complex once per cell cycle. Binds the DnaA box (a 9 base pair repeat at the origin) and separates the double-stranded (ds)DNA. Forms a right-handed helical filament on oriC DNA; dsDNA binds to the exterior of the filament while single-stranded (ss)DNA is stabiized in the filament's interior. The ATP-DnaA-oriC complex binds and stabilizes one strand of the AT-rich DNA unwinding element (DUE), permitting loading of DNA polymerase. After initiation quickly degrades to an ADP-DnaA complex that is not apt for DNA replication. Binds acidic phospholipids. This chain is Chromosomal replication initiator protein DnaA, found in Haemophilus ducreyi (strain 35000HP / ATCC 700724).